The primary structure comprises 328 residues: Radiation response metalloprotease IrrE (328 aa).

The tract at residues Met-1–His-31 is disordered. Residue His-118 coordinates Zn(2+). Glu-119 is a catalytic residue. Positions 122 and 149 each coordinate Zn(2+). Disordered stretches follow at residues Pro-217–Arg-238 and Arg-309–Gln-328.

In terms of biological role, plays a central regulatory role in DNA repair and protection pathways in response to radiation stress. Acts as a site-specific metalloprotease that cleaves and inactivates the repressor protein DdrO, resulting in induced expression of genes required for DNA repair and cell survival after exposure to radiation. Regulates the expression of dozens of proteins from different pathways, including the important DNA repair proteins RecA and PprA. Binds to the promoters of recA and pprA. In Deinococcus radiodurans (strain ATCC 13939 / DSM 20539 / JCM 16871 / CCUG 27074 / LMG 4051 / NBRC 15346 / NCIMB 9279 / VKM B-1422 / R1), this protein is Radiation response metalloprotease IrrE.